The chain runs to 413 residues: DNA primase DnaG (413 aa).

Positions 168-246 constitute a Toprim domain; it reads PNLIIVEGRA…KIDYVARAPV (79 aa). Mg(2+) contacts are provided by glutamate 174, aspartate 219, and aspartate 221.

It belongs to the archaeal DnaG primase family. Forms a ternary complex with MCM helicase and DNA. Component of the archaeal exosome complex. It depends on Mg(2+) as a cofactor.

The enzyme catalyses ssDNA + n NTP = ssDNA/pppN(pN)n-1 hybrid + (n-1) diphosphate.. Functionally, RNA polymerase that catalyzes the synthesis of short RNA molecules used as primers for DNA polymerase during DNA replication. Also part of the exosome, which is a complex involved in RNA degradation. Acts as a poly(A)-binding protein that enhances the interaction between heteromeric, adenine-rich transcripts and the exosome. The chain is DNA primase DnaG from Metallosphaera sedula (strain ATCC 51363 / DSM 5348 / JCM 9185 / NBRC 15509 / TH2).